Consider the following 318-residue polypeptide: Protoheme IX farnesyltransferase (318 aa).

A run of 9 helical transmembrane segments spans residues 33-53 (VMSLVVFTALVGLVAAPVSVH), 54-74 (PFIGFCAILFIAIGGGASGAL), 102-122 (GEALALGLGLSGLSVMMLALA), 125-145 (VLAGAFLAFTIFFYVVVYTMW), 154-174 (IVIGGAAGAFPPVIGWIAATG), 181-201 (WLMFALTFMWTPPHFWALALF), 225-245 (VHILIYTILLALLALGTAFSN), 246-266 (IGGPIYLAVALVLNALFLLGA), and 288-308 (FFKLSLLYLFLHFGAILAEAL).

Belongs to the UbiA prenyltransferase family. Protoheme IX farnesyltransferase subfamily. Interacts with CtaA.

The protein localises to the cell inner membrane. It carries out the reaction heme b + (2E,6E)-farnesyl diphosphate + H2O = Fe(II)-heme o + diphosphate. The protein operates within porphyrin-containing compound metabolism; heme O biosynthesis; heme O from protoheme: step 1/1. Functionally, converts heme B (protoheme IX) to heme O by substitution of the vinyl group on carbon 2 of heme B porphyrin ring with a hydroxyethyl farnesyl side group. The polypeptide is Protoheme IX farnesyltransferase (Ruegeria pomeroyi (strain ATCC 700808 / DSM 15171 / DSS-3) (Silicibacter pomeroyi)).